Consider the following 378-residue polypeptide: Mannitol-1-phosphate 5-dehydrogenase (378 aa).

4 to 15 is an NAD(+) binding site; that stretch reads SVHFGAGNIGRG.

Belongs to the mannitol dehydrogenase family.

The catalysed reaction is D-mannitol 1-phosphate + NAD(+) = beta-D-fructose 6-phosphate + NADH + H(+). The chain is Mannitol-1-phosphate 5-dehydrogenase from Streptococcus pneumoniae (strain Hungary19A-6).